We begin with the raw amino-acid sequence, 120 residues long: Small ribosomal subunit protein uS13 (120 aa).

Residues 97–120 are disordered; the sequence is PVRGQRTKTNARTRKGKKKTVGAK.

It belongs to the universal ribosomal protein uS13 family. Part of the 30S ribosomal subunit. Forms a loose heterodimer with protein S19. Forms two bridges to the 50S subunit in the 70S ribosome.

Its function is as follows. Located at the top of the head of the 30S subunit, it contacts several helices of the 16S rRNA. In the 70S ribosome it contacts the 23S rRNA (bridge B1a) and protein L5 of the 50S subunit (bridge B1b), connecting the 2 subunits; these bridges are implicated in subunit movement. Contacts the tRNAs in the A and P-sites. The polypeptide is Small ribosomal subunit protein uS13 (Nitratiruptor sp. (strain SB155-2)).